The primary structure comprises 496 residues: 1-aminocyclopropane-1-carboxylate synthase 2 (496 aa).

The substrate site is built by Glu-55 and Tyr-93. Lys-279 bears the N6-(pyridoxal phosphate)lysine mark. A phosphoserine mark is found at Ser-483, Ser-488, and Ser-491.

Belongs to the class-I pyridoxal-phosphate-dependent aminotransferase family. In terms of assembly, homodimer and heterodimer. In vivo, the relevance of heterodimerization with other ACS enzymes is however unsure. Interacts with GRF3. Pyridoxal 5'-phosphate serves as cofactor. In terms of processing, phosphorylated on serine residue by MAP kinase (MPK6). May be processed at its C-terminus. As to expression, high in developing leaves and in flowers. Expressed in roots and siliques.

The catalysed reaction is S-adenosyl-L-methionine = 1-aminocyclopropane-1-carboxylate + S-methyl-5'-thioadenosine + H(+). The protein operates within alkene biosynthesis; ethylene biosynthesis via S-adenosyl-L-methionine; ethylene from S-adenosyl-L-methionine: step 1/2. Functionally, 1-aminocyclopropane-1-carboxylate synthase (ACS) enzymes catalyze the conversion of S-adenosyl-L-methionine (SAM) into 1-aminocyclopropane-1-carboxylate (ACC), a direct precursor of ethylene. The chain is 1-aminocyclopropane-1-carboxylate synthase 2 (ACS2) from Arabidopsis thaliana (Mouse-ear cress).